The following is a 333-amino-acid chain: Glycerol-3-phosphate dehydrogenase [NAD(P)+] (333 aa).

NADPH is bound by residues Tyr14, His34, and Lys108. Sn-glycerol 3-phosphate is bound by residues Lys108, Gly137, and Thr139. Ala141 provides a ligand contact to NADPH. Sn-glycerol 3-phosphate is bound by residues Lys193, Asp247, Ser257, Arg258, and Asn259. The active-site Proton acceptor is Lys193. Residue Arg258 participates in NADPH binding. The NADPH site is built by Leu282 and Glu284.

Belongs to the NAD-dependent glycerol-3-phosphate dehydrogenase family.

It localises to the cytoplasm. It carries out the reaction sn-glycerol 3-phosphate + NAD(+) = dihydroxyacetone phosphate + NADH + H(+). The enzyme catalyses sn-glycerol 3-phosphate + NADP(+) = dihydroxyacetone phosphate + NADPH + H(+). It functions in the pathway membrane lipid metabolism; glycerophospholipid metabolism. In terms of biological role, catalyzes the reduction of the glycolytic intermediate dihydroxyacetone phosphate (DHAP) to sn-glycerol 3-phosphate (G3P), the key precursor for phospholipid synthesis. In Blochmanniella floridana, this protein is Glycerol-3-phosphate dehydrogenase [NAD(P)+].